The following is a 230-amino-acid chain: DNA repair protein rdl1 (230 aa).

In terms of assembly, interacts with rlp1 and sws1.

The protein localises to the cytoplasm. It localises to the nucleus. Functionally, involved in homologous recombination where it functions at an early stage of recombination in a pre-recombinogenic complex with rlp1 and sws1. Also has a role at a later stage of recombination in association with the rhp55-rhp57 complex. In Schizosaccharomyces pombe (strain 972 / ATCC 24843) (Fission yeast), this protein is DNA repair protein rdl1 (rdl1).